Consider the following 245-residue polypeptide: 1-(5-phosphoribosyl)-5-[(5-phosphoribosylamino)methylideneamino] imidazole-4-carboxamide isomerase (245 aa).

The active-site Proton acceptor is aspartate 8. Residue aspartate 131 is the Proton donor of the active site.

This sequence belongs to the HisA/HisF family.

The protein resides in the cytoplasm. It catalyses the reaction 1-(5-phospho-beta-D-ribosyl)-5-[(5-phospho-beta-D-ribosylamino)methylideneamino]imidazole-4-carboxamide = 5-[(5-phospho-1-deoxy-D-ribulos-1-ylimino)methylamino]-1-(5-phospho-beta-D-ribosyl)imidazole-4-carboxamide. It functions in the pathway amino-acid biosynthesis; L-histidine biosynthesis; L-histidine from 5-phospho-alpha-D-ribose 1-diphosphate: step 4/9. In Neisseria gonorrhoeae (strain ATCC 700825 / FA 1090), this protein is 1-(5-phosphoribosyl)-5-[(5-phosphoribosylamino)methylideneamino] imidazole-4-carboxamide isomerase.